We begin with the raw amino-acid sequence, 123 residues long: Prismalin-14 (123 aa).

An N-terminal signal peptide occupies residues 1–16; sequence MRSLLVLLALAACASA.

As to expression, prismatic layer of shell (at protein level). Expressed primarily in the mantle with highest level in the mantle edge and lower level in the mantle pallium.

It is found in the secreted. In terms of biological role, may be involved in calcification of the prismatic layer of the shell. This is Prismalin-14 from Margaritifera margaritifera (Freshwater pearl mussel).